We begin with the raw amino-acid sequence, 729 residues long: 1,4-alpha-glucan branching enzyme GlgB 2 (729 aa).

Aspartate 408 (nucleophile) is an active-site residue. The active-site Proton donor is the glutamate 461.

The protein belongs to the glycosyl hydrolase 13 family. GlgB subfamily. As to quaternary structure, monomer.

The catalysed reaction is Transfers a segment of a (1-&gt;4)-alpha-D-glucan chain to a primary hydroxy group in a similar glucan chain.. The protein operates within glycan biosynthesis; glycogen biosynthesis. In terms of biological role, catalyzes the formation of the alpha-1,6-glucosidic linkages in glycogen by scission of a 1,4-alpha-linked oligosaccharide from growing alpha-1,4-glucan chains and the subsequent attachment of the oligosaccharide to the alpha-1,6 position. The chain is 1,4-alpha-glucan branching enzyme GlgB 2 from Xanthomonas campestris pv. campestris (strain 8004).